The following is a 904-amino-acid chain: E3 ubiquitin-protein ligase HACE1 (904 aa).

7 ANK repeats span residues 34 to 63 (AVYT…DVNY), 68 to 97 (VKRS…NPNY), 101 to 130 (SGCT…DVNI), 134 to 163 (EGLT…NVDV), 167 to 196 (MGQT…DINR), 200 to 230 (SGAT…YLPD), and 232 to 261 (NGVT…RLFQ). Positions 569–904 (SNEKLKQGIA…HCGSYGYTMA (336 aa)) constitute an HECT domain. Catalysis depends on Cys-871, which acts as the Glycyl thioester intermediate.

It is found in the golgi apparatus. The protein localises to the golgi stack membrane. It localises to the cytoplasm. The protein resides in the endoplasmic reticulum. The enzyme catalyses S-ubiquitinyl-[E2 ubiquitin-conjugating enzyme]-L-cysteine + [acceptor protein]-L-lysine = [E2 ubiquitin-conjugating enzyme]-L-cysteine + N(6)-ubiquitinyl-[acceptor protein]-L-lysine.. The protein operates within protein modification; protein ubiquitination. In terms of biological role, E3 ubiquitin-protein ligase involved in Golgi membrane fusion and regulation of small GTPases. Acts as a regulator of Golgi membrane dynamics during the cell cycle: recruited to Golgi membrane by Rab proteins and regulates postmitotic Golgi membrane fusion. Acts by mediating ubiquitination during mitotic Golgi disassembly, ubiquitination serving as a signal for Golgi reassembly later, after cell division. The sequence is that of E3 ubiquitin-protein ligase HACE1 (hace1) from Danio rerio (Zebrafish).